The following is a 115-amino-acid chain: Large ribosomal subunit protein bL20 (115 aa).

This sequence belongs to the bacterial ribosomal protein bL20 family.

In terms of biological role, binds directly to 23S ribosomal RNA and is necessary for the in vitro assembly process of the 50S ribosomal subunit. It is not involved in the protein synthesizing functions of that subunit. This chain is Large ribosomal subunit protein bL20, found in Prochlorococcus marinus (strain MIT 9312).